A 132-amino-acid polypeptide reads, in one-letter code: Large ribosomal subunit protein uL22 (132 aa).

The protein belongs to the universal ribosomal protein uL22 family. In terms of assembly, part of the 50S ribosomal subunit.

Functionally, this protein binds specifically to 23S rRNA; its binding is stimulated by other ribosomal proteins, e.g. L4, L17, and L20. It is important during the early stages of 50S assembly. It makes multiple contacts with different domains of the 23S rRNA in the assembled 50S subunit and ribosome. The globular domain of the protein is located near the polypeptide exit tunnel on the outside of the subunit, while an extended beta-hairpin is found that lines the wall of the exit tunnel in the center of the 70S ribosome. This is Large ribosomal subunit protein uL22 from Rhodospirillum centenum (strain ATCC 51521 / SW).